The chain runs to 400 residues: Aspartate/prephenate aminotransferase (400 aa).

Glycine 39, tryptophan 125, and asparagine 175 together coordinate L-aspartate. Position 239 is an N6-(pyridoxal phosphate)lysine (lysine 239). An L-aspartate-binding site is contributed by arginine 375.

The protein belongs to the class-I pyridoxal-phosphate-dependent aminotransferase family. In terms of assembly, homodimer. The cofactor is pyridoxal 5'-phosphate.

The protein localises to the cytoplasm. It carries out the reaction L-aspartate + 2-oxoglutarate = oxaloacetate + L-glutamate. It catalyses the reaction L-arogenate + 2-oxoglutarate = prephenate + L-glutamate. In terms of biological role, catalyzes the reversible conversion of aspartate and 2-oxoglutarate to glutamate and oxaloacetate. Can also transaminate prephenate in the presence of glutamate. Required for symbiotic nitrogen fixation. The polypeptide is Aspartate/prephenate aminotransferase (Rhizobium meliloti (strain 1021) (Ensifer meliloti)).